The sequence spans 601 residues: NAD(+)--arginine ADP-ribosyltransferase Chelt (601 aa).

A signal peptide spans 1–18 (MKTIISLIFIMFPLFVSA). Residues 26–43 (ADSR…LYPR) and E130 contribute to the NAD(+) site. E130 is an active-site residue. C205 and C220 are joined by a disulfide.

It belongs to the enterotoxin A family.

The protein resides in the secreted. The enzyme catalyses L-arginyl-[protein] + NAD(+) = N(omega)-(ADP-D-ribosyl)-L-arginyl-[protein] + nicotinamide + H(+). Its function is as follows. A probable mono(ADP-ribosyl)transferase, it may ADP-ribosylate Arg in target protein(s). Upon expression in yeast cells causes cell death. This is NAD(+)--arginine ADP-ribosyltransferase Chelt from Vibrio cholerae.